We begin with the raw amino-acid sequence, 248 residues long: Probable transcriptional regulatory protein Mnod_7401 (248 aa).

Belongs to the TACO1 family.

Its subcellular location is the cytoplasm. In Methylobacterium nodulans (strain LMG 21967 / CNCM I-2342 / ORS 2060), this protein is Probable transcriptional regulatory protein Mnod_7401.